The primary structure comprises 154 residues: Peptide methionine sulfoxide reductase MsrB (154 aa).

In terms of domain architecture, MsrB spans 28–150 (DQQWREQLSE…NSVSLIFNKI (123 aa)). Cys67, Cys70, Cys116, and Cys119 together coordinate Zn(2+). Cys139 serves as the catalytic Nucleophile.

Belongs to the MsrB Met sulfoxide reductase family. Zn(2+) serves as cofactor.

It catalyses the reaction L-methionyl-[protein] + [thioredoxin]-disulfide + H2O = L-methionyl-(R)-S-oxide-[protein] + [thioredoxin]-dithiol. The chain is Peptide methionine sulfoxide reductase MsrB from Vibrio vulnificus (strain YJ016).